Reading from the N-terminus, the 336-residue chain is tRNA N6-adenosine threonylcarbamoyltransferase (336 aa).

Residues histidine 110 and histidine 114 each coordinate Fe cation. Substrate-binding positions include leucine 133–lysine 137, aspartate 166, glycine 179, and asparagine 271. Aspartate 300 serves as a coordination point for Fe cation.

The protein belongs to the KAE1 / TsaD family. Fe(2+) is required as a cofactor.

Its subcellular location is the cytoplasm. The catalysed reaction is L-threonylcarbamoyladenylate + adenosine(37) in tRNA = N(6)-L-threonylcarbamoyladenosine(37) in tRNA + AMP + H(+). Functionally, required for the formation of a threonylcarbamoyl group on adenosine at position 37 (t(6)A37) in tRNAs that read codons beginning with adenine. Is involved in the transfer of the threonylcarbamoyl moiety of threonylcarbamoyl-AMP (TC-AMP) to the N6 group of A37, together with TsaE and TsaB. TsaD likely plays a direct catalytic role in this reaction. The protein is tRNA N6-adenosine threonylcarbamoyltransferase of Buchnera aphidicola subsp. Acyrthosiphon pisum (strain 5A).